The primary structure comprises 182 residues: tRNA-splicing endonuclease (182 aa).

Residues Tyr119, His127, and Lys158 contribute to the active site.

The protein belongs to the tRNA-intron endonuclease family. Archaeal short subfamily. Homotetramer; although the tetramer contains four active sites, only two participate in the cleavage. Therefore, it should be considered as a dimer of dimers.

The catalysed reaction is pretRNA = a 3'-half-tRNA molecule with a 5'-OH end + a 5'-half-tRNA molecule with a 2',3'-cyclic phosphate end + an intron with a 2',3'-cyclic phosphate and a 5'-hydroxyl terminus.. In terms of biological role, endonuclease that removes tRNA introns. Cleaves pre-tRNA at the 5'- and 3'-splice sites to release the intron. The products are an intron and two tRNA half-molecules bearing 2',3' cyclic phosphate and 5'-OH termini. Recognizes a pseudosymmetric substrate in which 2 bulged loops of 3 bases are separated by a stem of 4 bp. This chain is tRNA-splicing endonuclease, found in Saccharolobus islandicus (strain L.S.2.15 / Lassen #1) (Sulfolobus islandicus).